The primary structure comprises 433 residues: WD repeat domain phosphoinositide-interacting protein 1 (433 aa).

Residues 127–132 carry the Nuclear receptor interaction motif; sequence LLKTLL. WD repeat units lie at residues 136-177 and 180-220; these read RNPH…CECT and AHDS…KLYE. A L/FRRG motif motif is present at residues 221 to 224; sequence FRRG. WD repeat units lie at residues 226–265 and 296–346; these read KRYV…ERSE and DRAF…GGEC.

It belongs to the WD repeat PROPPIN family.

The protein resides in the golgi apparatus. It is found in the trans-Golgi network. The protein localises to the endosome. Its subcellular location is the cytoplasmic vesicle. It localises to the clathrin-coated vesicle. The protein resides in the preautophagosomal structure membrane. It is found in the cytoplasm. The protein localises to the cytoskeleton. Component of the autophagy machinery that controls the major intracellular degradation process by which cytoplasmic materials are packaged into autophagosomes and delivered to lysosomes for degradation. Plays an important role in starvation- and calcium-mediated autophagy, as well as in mitophagy. Functions downstream of the ulk1 and PI3-kinases that produce phosphatidylinositol 3-phosphate (PtdIns3P) on membranes of the endoplasmic reticulum once activated. Binds phosphatidylinositol 3-phosphate (PtdIns3P), and maybe other phosphoinositides including PtdIns3,5P2 and PtdIns5P, and is recruited to phagophore assembly sites at the endoplasmic reticulum membranes. There, it assists wipi2 in the recruitment of atg12-atg5-atg16l1, a complex that directly controls the elongation of the nascent autophagosomal membrane. Together with wdr45/wipi4, promotes atg2 (atg2a or atg2b)-mediated lipid transfer by enhancing atg2-association with phosphatidylinositol 3-monophosphate (PI3P)-containing membranes. The chain is WD repeat domain phosphoinositide-interacting protein 1 (wipi1) from Xenopus laevis (African clawed frog).